Consider the following 238-residue polypeptide: LTAKLGYPITDDLDIYTRLGGMVWRADAKNNEGFKDHDTGVSPVFAGGVEYAITPEIATRLEYQWTNNIGDANTVGGRPDNGLLSVGVSYRFGQQEEAAPVVVAPAPAPEVQTKHFTLKSDVLFNFNKATLKPEGQQALDQMYSQLSNLDPKDGSVVVLGFTDRIGSDAYNQGLSEKRAQSVVDYLISKGIPSDKISARGMGESNPVTGNTCDNVKARAALIDCLAPDRRVEIEVKGI.

Beta stranded transmembrane passes span 1–8 (LTAKLGYP), 13–21 (LDIYTRLGG), 43–52 (PVFAGGVEYA), 57–64 (IATRLEYQ), and 83–91 (LLSVGVSYR). Repeat copies occupy residues 104–105 (AP), 106–107 (AP), and 108–109 (AP). Residues 104–109 (APAPAP) form a 3 X 2 AA tandem repeats of A-P region. Residues 111 to 238 (VQTKHFTLKS…RRVEIEVKGI (128 aa)) form the OmpA-like domain. Cys212 and Cys224 form a disulfide bridge.

Belongs to the outer membrane OOP (TC 1.B.6) superfamily. OmpA family. As to quaternary structure, monomer and homodimer.

It is found in the cell outer membrane. In terms of biological role, with TolR probably plays a role in maintaining the position of the peptidoglycan cell wall in the periplasm. Acts as a porin with low permeability that allows slow penetration of small solutes; an internal gate slows down solute passage. The polypeptide is Outer membrane protein A (Citrobacter freundii).